Here is a 194-residue protein sequence, read N- to C-terminus: Small ribosomal subunit protein uS4c (194 aa).

In terms of domain architecture, S4 RNA-binding spans 82–143 (MRLDNILFRL…KERSKVLIQN (62 aa)).

The protein belongs to the universal ribosomal protein uS4 family. In terms of assembly, part of the 30S ribosomal subunit. Contacts protein S5. The interaction surface between S4 and S5 is involved in control of translational fidelity.

The protein localises to the plastid. It is found in the chloroplast. In terms of biological role, one of the primary rRNA binding proteins, it binds directly to 16S rRNA where it nucleates assembly of the body of the 30S subunit. Its function is as follows. With S5 and S12 plays an important role in translational accuracy. The sequence is that of Small ribosomal subunit protein uS4c (rps4) from Trimezia steyermarkii (Steyermark's trimezia).